A 1284-amino-acid chain; its full sequence is MWSSDRLAGAGSGGAVVTVAFTNARDCFLHLPRRLVAQLHLLQNQAIEVASDHQPTYLSWVEGRHFNDQSENVAEINRQVGQKLGLSSGDQVFLRPCSHVVSCQQVEVEPLSADDWEILELHAISLEQHLLDQIRIVFPKAVVPIWVDQQTYIFIQIVTLMPAAPYGRLETNTKLLIQPKTRQAKESTFPKEGDAHGQVHSYGREQKGLSKELQTRQLHTNSEGITASNGRDPKVPGGPLKPSWWAVLGSMLSFGPDSKQESAWGSLELGAFKNMQSQAAPLEGTFRVCQVQPPSARTTTATSVFHKHCTAHVFPWDQEYFDVEPSFTVTYGKLVKLHSPKQQQDKSKQGVLLPDKEKQLSKSPDHKQISSNRSEEAAEACVLKVVWNGLEELKNATEFTESLELLHRGKVWIPDDLRKRLNIEMHAVVRITPLETTPKIPRSLKLQPRENLPKDVNEETIKTVFSSWVQQSATTMLPLVISKEERIKLEIKDGLREFSLSTVHSQEKEKEEGKTVFVLSSILLQKISVQVLLEPMIKEEQSAEIDFLLPSLTLSSLGGVSALGASAMEHITHSLLGRPLSRQLMALVAGLRNGALLITGGKGSGKSTFAKAICKEAQDTLDARVETVDCKALRGKRLESIQKALEVAFSEAAWRQPSVILLDDLDLIAGLPSVPEQEHSPEAVQSQRLAHALNDMIKEFVSTGSLVALIATSQLQQSLHPSLVSAQGIHTFQCVQHLQPPNPEQRCEILHSVVKNKLGCDISNFPDLDLQCIAKDTEAFVARDFTVLVDRAIHSSLSRQHSSSREDLTLTTSDFQKALRGFLPASLRNVNLHKPRDLGWDKIGGLHEVRQILMDTIQLPAKYPELFANLPIRQRTGILLYGPPGTGKTLLAGVVARESGMNFISIKGPELLSKYIGASEQAVRDVFIRAQAAKPCILFFDEFESIAPRRGHDNTGVTDRVVNQLLTQLDGVEGLQGVYVLAATSRPDLIDPALLRPGRLDKCVYCPPPDQVSRLEILTVLSKSLALADDVDLQHVASVTDSFTGADLKALLYNAQLEALQGRLLPSGLPDGGSSSDSDLSLSSMVFLNHSSGSDDSAGDGECGLEQSLLSLEMSEILPDESKFNMYRLYFGSSYESELGNGTPSDLSSHCLSAPSSVTQDLPAAPGKDPLFTQHPVFRTPSQEGCQDLTQEQRDQLRAEISIIKGRYRSQSGEDESLNQPGPIKTTFAISQAHLMTALAHTRPSISEDEGKEFAELYENFQNPKKRKNQSGTVFRTGQKVTLA.

A disordered region spans residues 339–373; the sequence is SPKQQQDKSKQGVLLPDKEKQLSKSPDHKQISSNR. Over residues 343–373 the composition is skewed to basic and acidic residues; that stretch reads QQDKSKQGVLLPDKEKQLSKSPDHKQISSNR. ATP is bound by residues 600–607 and 882–889; these read GGKGSGKS and GPPGTGKT. A phosphoserine mark is found at S1182, S1210, and S1212. The segment at 1261–1284 is disordered; the sequence is FQNPKKRKNQSGTVFRTGQKVTLA. A compositionally biased stretch (polar residues) spans 1270–1284; sequence QSGTVFRTGQKVTLA.

The protein belongs to the AAA ATPase family. Homooligomer; homooligomerizes in the cytosol, interaction with PEX6 promotes dissociation of the homooligomer. Interacts with PEX6; forming the PEX1-PEX6 AAA ATPase complex, which is composed of a heterohexamer formed by a trimer of PEX1-PEX6 dimers. Interacts indirectly with PEX26, via its interaction with PEX6.

It localises to the cytoplasm. The protein resides in the cytosol. Its subcellular location is the peroxisome membrane. The enzyme catalyses ATP + H2O = ADP + phosphate + H(+). Component of the PEX1-PEX6 AAA ATPase complex, a protein dislocase complex that mediates the ATP-dependent extraction of the PEX5 receptor from peroxisomal membranes, an essential step for PEX5 recycling. Specifically recognizes PEX5 monoubiquitinated at 'Cys-11', and pulls it out of the peroxisome lumen through the PEX2-PEX10-PEX12 retrotranslocation channel. Extraction by the PEX1-PEX6 AAA ATPase complex is accompanied by unfolding of the TPR repeats and release of bound cargo from PEX5. This Mus musculus (Mouse) protein is Peroxisomal ATPase PEX1.